A 679-amino-acid polypeptide reads, in one-letter code: MKPYEPKSWVTRVFLVWWLTALSCFFISGRLIYLQLLKGKWLKEKALKQQTVTLKTFQPRRNICDRNGIPLAIDTLAYDVFAHPLYFSISIEEVANKLSPILCIDSLSIQKLLKPTSTGICLASQLPENTGKLIASLRLDGIDLIKHPKRYYPYKEIVGNVIGYVDTSHQGQAGIELSCQESLQLNSPTLTSSIDGRGVLISHQIPKELFIQDNLSLQLTLDLELQKIAYKALKQGLENCKGKRGTVLILDPKTGGILTLVALPSYDPNIYYDFPIERFKPWPVTDLYEPGSTFKPLNIAIALETKAISPEDSFYDEGCIRVGDSIITNNDYNSYKPLPCLPNTYNKIVKLLANSSNVGMVHILERIAPEIYHSWLSKLDLGHAASPLETDLPWASESSLKDINEFVCYEIEPAAASFGQGLAMTPIKLAQLYASLANGGILVKPYLVTGLANAAEDTQKAKGIDLPSYNIRKKNLGNHLSWHKAEPSYLFLKRSGIRVTDLLRHIKAEGRFALPFRKNLLQLFTQDAHRTTELQLEPKAHQPQLLRPTRHAVYATNQSKRVFSHETTKLLLDMLEDVIWNGTGSSCFVEGYRIGGKTGTSQKHTQEGGYSKTKIITSFAAIFPTEDPQYVILTVIDEPNIPLSFGSNTAAPIVKSIIESLIDIKKMKPTIPIIKVKKD.

A helical membrane pass occupies residues 13-33; it reads VFLVWWLTALSCFFISGRLIY. The active-site Acyl-ester intermediate is S292.

The protein belongs to the transpeptidase family.

The protein localises to the plastid. It localises to the chloroplast membrane. The catalysed reaction is Preferential cleavage: (Ac)2-L-Lys-D-Ala-|-D-Ala. Also transpeptidation of peptidyl-alanyl moieties that are N-acyl substituents of D-alanine.. This Chlorokybus atmophyticus (Soil alga) protein is Peptidoglycan D,D-transpeptidase FtsI homolog (ftsI).